Consider the following 264-residue polypeptide: S-adenosylmethionine decarboxylase proenzyme (264 aa).

The Schiff-base intermediate with substrate; via pyruvic acid role is filled by serine 112. Serine 112 bears the Pyruvic acid (Ser); by autocatalysis mark. Histidine 117 acts as the Proton acceptor; for processing activity in catalysis. Cysteine 140 serves as the catalytic Proton donor; for catalytic activity.

The protein belongs to the prokaryotic AdoMetDC family. Type 2 subfamily. Heterooctamer of four alpha and four beta chains arranged as a tetramer of alpha/beta heterodimers. It depends on pyruvate as a cofactor. Is synthesized initially as an inactive proenzyme. Formation of the active enzyme involves a self-maturation process in which the active site pyruvoyl group is generated from an internal serine residue via an autocatalytic post-translational modification. Two non-identical subunits are generated from the proenzyme in this reaction, and the pyruvate is formed at the N-terminus of the alpha chain, which is derived from the carboxyl end of the proenzyme. The post-translation cleavage follows an unusual pathway, termed non-hydrolytic serinolysis, in which the side chain hydroxyl group of the serine supplies its oxygen atom to form the C-terminus of the beta chain, while the remainder of the serine residue undergoes an oxidative deamination to produce ammonia and the pyruvoyl group blocking the N-terminus of the alpha chain.

The catalysed reaction is S-adenosyl-L-methionine + H(+) = S-adenosyl 3-(methylsulfanyl)propylamine + CO2. The protein operates within amine and polyamine biosynthesis; S-adenosylmethioninamine biosynthesis; S-adenosylmethioninamine from S-adenosyl-L-methionine: step 1/1. Its function is as follows. Catalyzes the decarboxylation of S-adenosylmethionine to S-adenosylmethioninamine (dcAdoMet), the propylamine donor required for the synthesis of the polyamines spermine and spermidine from the diamine putrescine. The sequence is that of S-adenosylmethionine decarboxylase proenzyme from Salmonella arizonae (strain ATCC BAA-731 / CDC346-86 / RSK2980).